The primary structure comprises 612 residues: Coagulation factor X-activating enzyme heavy chain (612 aa).

A signal peptide spans 1 to 20 (MMQVLLVTISLAVFPYQGSS). Positions 21–193 (IILESGNVND…KKASQLVATS (173 aa)) are cleaved as a propeptide — or 194. A Peptidase M12B domain is found at 201-395 (TFIELVIVVD…YKPKCILNPP (195 aa)). Position 204 (E204) interacts with Ca(2+). N259 carries N-linked (GlcNAc...) asparagine glycosylation. D286 lines the Ca(2+) pocket. Cystine bridges form between C310–C390, C350–C374, and C352–C357. Position 335 (H335) interacts with Zn(2+). E336 is a catalytic residue. Residues H339 and H345 each coordinate Zn(2+). N-linked (GlcNAc...) asparagine glycosylation is found at N353 and N373. The Ca(2+) site is built by C390, N393, I405, N408, E412, E415, and D418. In terms of domain architecture, Disintegrin spans 403-489 (PPICGNEIWE…ECPADGFHAN (87 aa)). A disulfide bond links C461 and C481. The D/ECD-tripeptide signature appears at 467-469 (ECD).

This sequence belongs to the venom metalloproteinase (M12B) family. P-III subfamily. P-IIId sub-subfamily. Heterotrimer; disulfide-linked. The heterotrimer consists of 1 heavy chain and 2 light chains (lectins): LC1 and LC2 (AC Q7T045 and AC Q696W1). Requires Zn(2+) as cofactor. Post-translationally, N-glycosylated. Contains 8.0% of hexoses, 2.5% of hexosamines and 2.5% of sialic acids. In terms of tissue distribution, expressed by the venom gland.

Its subcellular location is the secreted. The catalysed reaction is Specifically activates several components of the blood clotting system, including coagulation factor X, coagulation factor IX and protein C by cleavage of Arg-|-Xaa bonds. Has no action on insulin B chain.. Calcium is required for the activity of the heterotrimer. In terms of biological role, catalytic subunit of blood coagulation factor X-activating enzyme. Activates coagulation factor X (F10) by cleaving the Arg(234)-Ile(235) bond, activates coagulation factor IX (F9) by cleaving the Arg(226)-Val(227) bond and is also able to activate protein C (PROC). This is Coagulation factor X-activating enzyme heavy chain from Macrovipera lebetinus (Levantine viper).